The following is a 360-amino-acid chain: DNA replication and repair protein RecF (360 aa).

33–40 (GENGSGKT) contributes to the ATP binding site.

It belongs to the RecF family.

Its subcellular location is the cytoplasm. Its function is as follows. The RecF protein is involved in DNA metabolism; it is required for DNA replication and normal SOS inducibility. RecF binds preferentially to single-stranded, linear DNA. It also seems to bind ATP. In Rickettsia akari (strain Hartford), this protein is DNA replication and repair protein RecF.